The following is a 116-amino-acid chain: Large ribosomal subunit protein bL20 (116 aa).

It belongs to the bacterial ribosomal protein bL20 family.

Binds directly to 23S ribosomal RNA and is necessary for the in vitro assembly process of the 50S ribosomal subunit. It is not involved in the protein synthesizing functions of that subunit. The sequence is that of Large ribosomal subunit protein bL20 from Thermosynechococcus vestitus (strain NIES-2133 / IAM M-273 / BP-1).